Reading from the N-terminus, the 214-residue chain is Ependymin (214 aa).

The signal sequence occupies residues Met-1–Ala-20. 2 N-linked (GlcNAc...) asparagine glycosylation sites follow: Asn-70 and Asn-93.

The protein belongs to the ependymin family. In terms of assembly, forms disulfide-linked dimers. In terms of processing, binds calcium through the terminal sialic acids.

Its subcellular location is the secreted. May play a role in neural plasticity. May be involved during axon regeneration. This chain is Ependymin (epd), found in Notemigonus crysoleucas (Golden shiner).